We begin with the raw amino-acid sequence, 470 residues long: MSYKSAIIGLCLLAVILLAPPLAWHSHTKNIPAIILITWLLTMNLTCIVDAAIWSDDDFLTRWDGKGWCDIVIKLQVGANIGISCAVTNIIYNLHTILKADSVLPDLSSWTKIVKDLVISLFTPVMVMGFSYLLQVFRYGIARYNGCQNLLSPTWITTVLYTMWMLIWSFVGAVYATLVLFVFYKKRKDVRDILHCTNSGLNLTRFARLLIFCFIIILVMFPFSVYTFVQDLQQVEGHYTFKNTHSSTIWNTIIKFDPGRPIYNIWLYVLMSYLVFLIFGLGSDALHMYSKFLRSIKLGFVLDMWKRFIDKNKEKRVGILLNKLSSRKESRNPFSTDSENYISTCTENYSPCVGTPISQAHFYVDYRIPDDPRKSQNKSKKYLFADKETDDILDEIDLKESRHIPYVTQGQSFDDEISLGGFSKVTLDYSEKLHNSASSNFEGESLCYSPASKEENSSSNEHSSENTAGP.

Residues 1–5 (MSYKS) lie on the Extracellular side of the membrane. A helical transmembrane segment spans residues 6 to 23 (AIIGLCLLAVILLAPPLA). At 24-29 (WHSHTK) the chain is on the cytoplasmic side. The chain crosses the membrane as a helical span at residues 30 to 53 (NIPAIILITWLLTMNLTCIVDAAI). Residues 54-70 (WSDDDFLTRWDGKGWCD) lie on the Extracellular side of the membrane. The chain crosses the membrane as a helical span at residues 71 to 98 (IVIKLQVGANIGISCAVTNIIYNLHTIL). Residues 99-116 (KADSVLPDLSSWTKIVKD) lie on the Cytoplasmic side of the membrane. The chain crosses the membrane as a helical span at residues 117–134 (LVISLFTPVMVMGFSYLL). Over 135–155 (QVFRYGIARYNGCQNLLSPTW) the chain is Extracellular. A helical membrane pass occupies residues 156–183 (ITTVLYTMWMLIWSFVGAVYATLVLFVF). Residues 184–205 (YKKRKDVRDILHCTNSGLNLTR) are Cytoplasmic-facing. A helical transmembrane segment spans residues 206–228 (FARLLIFCFIIILVMFPFSVYTF). Residues 229 to 266 (VQDLQQVEGHYTFKNTHSSTIWNTIIKFDPGRPIYNIW) lie on the Extracellular side of the membrane. The chain crosses the membrane as a helical span at residues 267-285 (LYVLMSYLVFLIFGLGSDA). Over 286-470 (LHMYSKFLRS…EHSSENTAGP (185 aa)) the chain is Cytoplasmic. Positions 300–470 (FVLDMWKRFI…EHSSENTAGP (171 aa)) are hydrophilic. Positions 440-470 (NFEGESLCYSPASKEENSSSNEHSSENTAGP) are disordered.

Belongs to the G-protein coupled receptor 4 family.

The protein localises to the membrane. Its function is as follows. Receptor for the peptide pheromone a factor. This chain is Pheromone a factor receptor (STE3), found in Saccharomyces cerevisiae (strain ATCC 204508 / S288c) (Baker's yeast).